The sequence spans 122 residues: Small ribosomal subunit protein uS13 (122 aa).

A disordered region spans residues 97–122 (PVRGQRTHTNARTRKGPAKAIAGKKK).

It belongs to the universal ribosomal protein uS13 family. In terms of assembly, part of the 30S ribosomal subunit. Forms a loose heterodimer with protein S19. Forms two bridges to the 50S subunit in the 70S ribosome.

Functionally, located at the top of the head of the 30S subunit, it contacts several helices of the 16S rRNA. In the 70S ribosome it contacts the 23S rRNA (bridge B1a) and protein L5 of the 50S subunit (bridge B1b), connecting the 2 subunits; these bridges are implicated in subunit movement. Contacts the tRNAs in the A and P-sites. This is Small ribosomal subunit protein uS13 from Brucella anthropi (strain ATCC 49188 / DSM 6882 / CCUG 24695 / JCM 21032 / LMG 3331 / NBRC 15819 / NCTC 12168 / Alc 37) (Ochrobactrum anthropi).